The primary structure comprises 54 residues: Large ribosomal subunit protein bL33 (54 aa).

It belongs to the bacterial ribosomal protein bL33 family.

The polypeptide is Large ribosomal subunit protein bL33 (Rhodopirellula baltica (strain DSM 10527 / NCIMB 13988 / SH1)).